Consider the following 370-residue polypeptide: Sensor histidine kinase DesK (370 aa).

Residues 1–10 lie on the Extracellular side of the membrane; it reads MIKNHFTFQK. A helical membrane pass occupies residues 11–31; sequence LNGITPYIWTIFFILPFYFIW. Residues 32–36 lie on the Cytoplasmic side of the membrane; the sequence is KSSST. The chain crosses the membrane as a helical span at residues 37–57; sequence FVIIVGIILTLLFFSVYRFAF. Residues 58–70 are Extracellular-facing; the sequence is VSKGWTIYLWGFL. Residues 71–91 traverse the membrane as a helical segment; sequence LIGISTASITLFSYIYFAFFI. The Cytoplasmic portion of the chain corresponds to 92 to 103; it reads AYFIGNIKERVP. Residues 104–124 traverse the membrane as a helical segment; it reads FHILYYVHLISAAVAANFSLV. At 125 to 128 the chain is on the extracellular side; it reads LKKE. Residues 129–149 traverse the membrane as a helical segment; that stretch reads FFLTQIPFVVITLISAILLPF. Residues 150–370 are Cytoplasmic-facing; sequence SIKSRKERER…LTMAIPNNSK (221 aa). Residues 186–369 enclose the Histidine kinase domain; that stretch reads DLHDTLGQKL…KLTMAIPNNS (184 aa). His188 is subject to Phosphohistidine; by autocatalysis.

The protein localises to the cell membrane. It carries out the reaction ATP + protein L-histidine = ADP + protein N-phospho-L-histidine.. Functionally, member of the two-component regulatory system DesR/DesK, responsible for cold induction of the des gene coding for the Delta5 acyl-lipid desaturase. Acts as a sensor of the membrane fluidity. Probably activates DesR by phosphorylation. The polypeptide is Sensor histidine kinase DesK (desK) (Bacillus subtilis (strain 168)).